A 126-amino-acid polypeptide reads, in one-letter code: uncharacterized protein (126 aa).

2 stretches are compositionally biased toward basic residues: residues 21–31 and 41–83; these read RKKRKKRKKRR and RILK…RKRR. The segment at 21-83 is disordered; sequence RKKRKKRKKR…RSPRKRRKRR (63 aa).

This is an uncharacterized protein from Saccharomyces cerevisiae (strain ATCC 204508 / S288c) (Baker's yeast).